We begin with the raw amino-acid sequence, 297 residues long: Counting factor 45-1 (297 aa).

The signal sequence occupies residues 1 to 20; the sequence is MNKLISLLLVCLVAIALVNA. Residues 24 to 235 enclose the Ch-type lysozyme domain; the sequence is IDFDSDTVNS…SASTGSGSGS (212 aa). Active-site residues include aspartate 29, aspartate 119, and glutamate 121. Asparagine 166 is a glycosylation site (N-linked (GlcNAc...) asparagine). The segment at 231-296 is S-G-S motif repeats; the sequence is SGSGSSSGSS…GSSSGSGSGS (66 aa). The segment at 231-297 is disordered; that stretch reads SGSGSSSGSS…SSSGSGSGSS (67 aa). Residues 234–275 are compositionally biased toward low complexity; the sequence is GSSSGSSSGSSSGSSSGSGSSSGSGSSSGSSSGSGSGSSSSG. Gly residues predominate over residues 276–297; that stretch reads SGSGSGSSSGSGSSSGSGSGSS.

The protein belongs to the glycosyl hydrolase 25 family. As to quaternary structure, monomer. Component of the counting factor (CF) complex, which includes cf60, cf50, cf45-1 and ctnA.

The protein resides in the secreted. Functionally, cell-counting factor that limits the maximum size of the multicellular structure during aggregation. The sequence is that of Counting factor 45-1 (cf45-1) from Dictyostelium discoideum (Social amoeba).